A 205-amino-acid polypeptide reads, in one-letter code: Large ribosomal subunit protein uL13 (205 aa).

Belongs to the universal ribosomal protein uL13 family.

This is Large ribosomal subunit protein uL13 (RpL13A) from Drosophila melanogaster (Fruit fly).